The following is a 145-amino-acid chain: Pleckstrin homology domain-containing protein 1 (145 aa).

One can recognise a PH domain in the interval 26–127; it reads NPERSGWLTK…WINSIGRSIV (102 aa). Positions 29-53 are binds specifically PtdIns3P; sequence RSGWLTKQGDYIKTWRRRWFVLKRG.

As to quaternary structure, binds PtdIns3P. In terms of tissue distribution, ubiquitously expressed.

Its subcellular location is the cytoplasm. In terms of biological role, binds specifically to phosphatidylinositol 3-phosphate (PtdIns3P), but not to other phosphoinositides. This chain is Pleckstrin homology domain-containing protein 1 (PH1), found in Arabidopsis thaliana (Mouse-ear cress).